The chain runs to 354 residues: Kelch domain-containing protein 8B (354 aa).

Kelch repeat units follow at residues 1–31, 32–79, 81–127, 128–175, 176–222, 224–281, 282–329, and 331–354; these read MAAG…HQDG, HLLV…VLGK, VLVV…ERDG, MVYA…LHGN, KIYV…MAEG, VFSL…SLGG, NIVA…QAGP, and LFVI…RDGV.

It localises to the cytoplasm. Its subcellular location is the midbody. In terms of biological role, involved in pinching off the separated nuclei at the cleavage furrow and in cytokinesis. Required for mitotic integrity and maintenance of chromosomal stability. Protects cells against mitotic errors, centrosomal amplification, micronucleus formation and aneuploidy. Plays a key role of midbody function involving abscission of the daughter cells during cytokinesis and appropriate chromosomal and nuclear segregation into the daughter cells. The chain is Kelch domain-containing protein 8B (Klhdc8b) from Rattus norvegicus (Rat).